The chain runs to 529 residues: Probable pectinesterase/pectinesterase inhibitor 35 (529 aa).

The N-terminal stretch at 1–34 (MATTSFSLPNHKFGIKLMLFLVLNLLSLQTSVFA) is a signal peptide. Residues 36-180 (SSNSKFTKIS…TGLLTNSLDM (145 aa)) are pectinesterase inhibitor 35. Residues 42-64 (TKISRHPNSDSSSRTKPSTSSNK) form a disordered region. Positions 50 to 64 (SDSSSRTKPSTSSNK) are enriched in low complexity. Asparagine 86, asparagine 169, and asparagine 193 each carry an N-linked (GlcNAc...) asparagine glycan. Positions 228–514 (HAVVAADGSG…FTVSGFIDGN (287 aa)) are pectinesterase 35. Substrate is bound by residues threonine 302 and glutamine 332. The active-site Proton donor; for pectinesterase activity is the aspartate 355. The Nucleophile; for pectinesterase activity role is filled by aspartate 376. Residues arginine 434 and tryptophan 436 each coordinate substrate.

It in the N-terminal section; belongs to the PMEI family. In the C-terminal section; belongs to the pectinesterase family. Expressed in siliques.

The protein resides in the secreted. It localises to the cell wall. It carries out the reaction [(1-&gt;4)-alpha-D-galacturonosyl methyl ester](n) + n H2O = [(1-&gt;4)-alpha-D-galacturonosyl](n) + n methanol + n H(+). It participates in glycan metabolism; pectin degradation; 2-dehydro-3-deoxy-D-gluconate from pectin: step 1/5. In terms of biological role, acts in the modification of cell walls via demethylesterification of cell wall pectin. The sequence is that of Probable pectinesterase/pectinesterase inhibitor 35 (PME35) from Arabidopsis thaliana (Mouse-ear cress).